The primary structure comprises 201 residues: dITP/XTP pyrophosphatase (201 aa).

8-13 (TTNENK) contributes to the substrate binding site. Asp-68 serves as the catalytic Proton acceptor. Asp-68 provides a ligand contact to Mg(2+). Residues Ser-69, 155 to 158 (FGYD), Lys-177, and 182 to 183 (HR) contribute to the substrate site.

Belongs to the HAM1 NTPase family. In terms of assembly, homodimer. Mg(2+) is required as a cofactor.

The enzyme catalyses XTP + H2O = XMP + diphosphate + H(+). The catalysed reaction is dITP + H2O = dIMP + diphosphate + H(+). It catalyses the reaction ITP + H2O = IMP + diphosphate + H(+). In terms of biological role, pyrophosphatase that catalyzes the hydrolysis of nucleoside triphosphates to their monophosphate derivatives, with a high preference for the non-canonical purine nucleotides XTP (xanthosine triphosphate), dITP (deoxyinosine triphosphate) and ITP. Seems to function as a house-cleaning enzyme that removes non-canonical purine nucleotides from the nucleotide pool, thus preventing their incorporation into DNA/RNA and avoiding chromosomal lesions. The chain is dITP/XTP pyrophosphatase from Borrelia garinii subsp. bavariensis (strain ATCC BAA-2496 / DSM 23469 / PBi) (Borreliella bavariensis).